The primary structure comprises 232 residues: Orotate phosphoribosyltransferase (232 aa).

5-phospho-alpha-D-ribose 1-diphosphate-binding positions include R107, K108, K111, H113, and 133 to 141 (EDLTTAGGS). T137 contributes to the orotate binding site.

This sequence belongs to the purine/pyrimidine phosphoribosyltransferase family. PyrE subfamily. In terms of assembly, homodimer. Requires Mg(2+) as cofactor.

The catalysed reaction is orotidine 5'-phosphate + diphosphate = orotate + 5-phospho-alpha-D-ribose 1-diphosphate. It participates in pyrimidine metabolism; UMP biosynthesis via de novo pathway; UMP from orotate: step 1/2. Functionally, catalyzes the transfer of a ribosyl phosphate group from 5-phosphoribose 1-diphosphate to orotate, leading to the formation of orotidine monophosphate (OMP). This is Orotate phosphoribosyltransferase from Sinorhizobium fredii (strain NBRC 101917 / NGR234).